The primary structure comprises 98 residues: Defensin (98 aa).

The first 19 residues, 1–19 (MRTFLVTFVLVVVVGVISA), serve as a signal peptide directing secretion. A propeptide spanning residues 20–58 (YPSNPVEVEAEDFDAQDPDLQTFQDTFYEVPQVHSRQKR) is cleaved from the precursor. Intrachain disulfides connect Cys61/Cys88, Cys74/Cys94, and Cys78/Cys96.

In terms of tissue distribution, is synthesized by the fat body and eventually secreted into the hemolymph.

It is found in the secreted. Its function is as follows. Has antiparasitic activity against promastigote forms of L.major, and antibacterial activity against Gram-positive bacterium S.aureus. Has antifungal activity against the yeasts C.albicans and S.cerevisiae, but not C.glabrata. Has antifungal activity against filamentous fungi A.fumigatus, F.culmorum, F.oxysporum, N.crassa, T.viride and T.mentagrophytes, but not B.bassiana. This is Defensin from Phlebotomus duboscqi (Sandfly).